The primary structure comprises 88 residues: Sapecin-B (88 aa).

The N-terminal stretch at Met-1 to Ala-24 is a signal peptide. The propeptide occupies Lys-25–Arg-54. 3 disulfides stabilise this stretch: Cys-57-Cys-78, Cys-64-Cys-84, and Cys-68-Cys-86.

Belongs to the invertebrate defensin family. Type 1 subfamily. As to expression, hemocytes and fat body.

It is found in the secreted. In terms of biological role, sapecins, which are potent bactericidal proteins, are produced in response to injury. Sapecin B is cytotoxic to Gram-positive bacteria. The polypeptide is Sapecin-B (Sarcophaga peregrina (Flesh fly)).